A 5911-amino-acid polypeptide reads, in one-letter code: Nonribosomal peptide synthetase 30 (5911 aa).

The tract at residues Met-1–Asp-22 is disordered. The tract at residues Ala-352 to Arg-754 is adenylation 1. Residues Pro-891–Thr-968 enclose the Carrier 1 domain. The residue at position 928 (Ser-928) is an O-(pantetheine 4'-phosphoryl)serine. The tract at residues Glu-1007–Leu-1422 is condensation 1. The adenylation 2 stretch occupies residues Glu-1467–Asp-1865. A Carrier 2 domain is found at Gln-2001–Ser-2077. Ser-2038 bears the O-(pantetheine 4'-phosphoryl)serine mark. Residues Gln-2121 to Gly-2538 are condensation 2. Positions Glu-2568–Arg-2977 are adenylation 3. The region spanning Gln-3110–Lys-3186 is the Carrier 3 domain. Residue Ser-3147 is modified to O-(pantetheine 4'-phosphoryl)serine. Residues Val-3227–Ala-3652 are condensation 3. The tract at residues Glu-3701–Arg-4108 is adenylation 4. The region spanning Pro-4248–Lys-4325 is the Carrier 4 domain. Ser-4285 is modified (O-(pantetheine 4'-phosphoryl)serine). The disordered stretch occupies residues Ala-4326–Ala-4347. Residues Ser-4353–Arg-4793 form a condensation 4 region. Residues Phe-4819–Arg-5231 form an adenylation 5 region. Residues Lys-5360–Val-5436 form the Carrier 5 domain. Residue Ser-5397 is modified to O-(pantetheine 4'-phosphoryl)serine. A condensation 5 region spans residues Val-5474–Thr-5828.

This sequence belongs to the NRP synthetase family.

The protein operates within secondary metabolite biosynthesis. Functionally, nonribosomal peptide synthetase; part of the gene cluster that mediates the biosynthesis of sansalvamide, a cyclic pentadepsipeptide that shows promising results as potential anti-cancer drug. The nonribosmal peptide synthetase NRPS30 produces sansalvamide by incorporating successively one phenylalanine, one leucine, one alpha-hydroxyisocaproic acid (HICA), one valine and one leucine before sansalvamide is released from by cyclization by the terminal C domain of NRPS30. The HICA residue is probably provided by reduction of alpha-ketoisocaproate by the cluster-specific aldo-keto reductase (NECHADRAFT_45914). The chain is Nonribosomal peptide synthetase 30 from Fusarium vanettenii (strain ATCC MYA-4622 / CBS 123669 / FGSC 9596 / NRRL 45880 / 77-13-4) (Fusarium solani subsp. pisi).